A 1554-amino-acid chain; its full sequence is Myosin-2 (1554 aa).

In terms of domain architecture, Myosin N-terminal SH3-like spans 4–57 (EVGTRCWYPDKQQGWIGGEITKHTNLSNKHQLELTLEDNQIVEIESETLDETKD). Residues 70–774 (EATEDLTSLS…MLAYLEKLRS (705 aa)) form the Myosin motor domain. Position 164–171 (164–171 (GESGAGKT)) interacts with ATP. The interval 443–523 (FIGVLDIYGF…LGILSLLDEE (81 aa)) is actin-binding. IQ domains lie at 778–798 (HNSSVLIQKKVKAVYYRKKYL), 800–824 (IISSIRNFHSRSEGFLTRQRVDLEF), 825–847 (KTQAAILIQSMVRSTSTRNKTIS), 848–872 (LLSAITRLQSLVRKQLAQKELLQRR), 873–895 (QRDAAVSIQKKIRAFEPRQSFNT), and 896–925 (TRRSTVVVQSLVRKKFAQKKLKDLKTEAKS). Positions 926–1079 (VNHLKEVSYK…IARLQAAVRS (154 aa)) form a coiled coil. A non alpha-helical, tail domain region spans residues 1080-1554 (GVTSSTITST…VTVQESQRTE (475 aa)). Residues 1082–1093 (TSSTITSTPTAS) show a composition bias toward low complexity. The tract at residues 1082–1109 (TSSTITSTPTASRRFSAHSSVADGTSPR) is disordered. The span at 1098–1109 (AHSSVADGTSPR) shows a compositional bias: polar residues. In terms of domain architecture, Dilute spans 1205-1480 (AEVLSTIQKL…LNFVADRVKK (276 aa)).

The protein belongs to the TRAFAC class myosin-kinesin ATPase superfamily. Myosin family. In terms of assembly, homodimer. Interacts with calmodulin (CMD1) and the myosin light chain MLC1 through its IQ repeats.

Its function is as follows. Myosin heavy chain that is required for the cell cycle-regulated transport of various organelles and proteins for their segregation. Functions by binding with its tail domain to receptor proteins on organelles and exerting force with its N-terminal motor domain against actin filaments, thereby transporting its cargo along polarized actin cables. This is Myosin-2 (MYO2) from Lachancea kluyveri (strain ATCC 58438 / CBS 3082 / BCRC 21498 / NBRC 1685 / JCM 7257 / NCYC 543 / NRRL Y-12651) (Yeast).